The primary structure comprises 280 residues: Ribosomal RNA small subunit methyltransferase A (280 aa).

Residues Asn-28, Leu-30, Gly-55, Glu-77, Asp-103, and Asn-122 each coordinate S-adenosyl-L-methionine.

This sequence belongs to the class I-like SAM-binding methyltransferase superfamily. rRNA adenine N(6)-methyltransferase family. RsmA subfamily.

The protein resides in the cytoplasm. The catalysed reaction is adenosine(1518)/adenosine(1519) in 16S rRNA + 4 S-adenosyl-L-methionine = N(6)-dimethyladenosine(1518)/N(6)-dimethyladenosine(1519) in 16S rRNA + 4 S-adenosyl-L-homocysteine + 4 H(+). Its function is as follows. Specifically dimethylates two adjacent adenosines (A1518 and A1519) in the loop of a conserved hairpin near the 3'-end of 16S rRNA in the 30S particle. May play a critical role in biogenesis of 30S subunits. This Dinoroseobacter shibae (strain DSM 16493 / NCIMB 14021 / DFL 12) protein is Ribosomal RNA small subunit methyltransferase A.